We begin with the raw amino-acid sequence, 332 residues long: Anthranilate phosphoribosyltransferase (332 aa).

Residues Gly79, 82 to 83 (GD), Thr87, 89 to 92 (NIST), 107 to 115 (KHGNRSVSS), and Ser119 each bind 5-phospho-alpha-D-ribose 1-diphosphate. Residue Gly79 participates in anthranilate binding. Ser91 lines the Mg(2+) pocket. Asn110 is an anthranilate binding site. Anthranilate is bound at residue Arg165. Mg(2+) is bound by residues Asp223 and Glu224.

It belongs to the anthranilate phosphoribosyltransferase family. Homodimer. The cofactor is Mg(2+).

The enzyme catalyses N-(5-phospho-beta-D-ribosyl)anthranilate + diphosphate = 5-phospho-alpha-D-ribose 1-diphosphate + anthranilate. It participates in amino-acid biosynthesis; L-tryptophan biosynthesis; L-tryptophan from chorismate: step 2/5. Its function is as follows. Catalyzes the transfer of the phosphoribosyl group of 5-phosphorylribose-1-pyrophosphate (PRPP) to anthranilate to yield N-(5'-phosphoribosyl)-anthranilate (PRA). This Vibrio parahaemolyticus serotype O3:K6 (strain RIMD 2210633) protein is Anthranilate phosphoribosyltransferase.